The chain runs to 43 residues: Protein PsbN (43 aa).

A helical transmembrane segment spans residues 5–27 (TLVXISISGSLVSFTGYALYTAF).

This sequence belongs to the PsbN family.

Its subcellular location is the plastid. The protein resides in the chloroplast thylakoid membrane. May play a role in photosystem I and II biogenesis. The chain is Protein PsbN from Calycanthus floridus (Eastern sweetshrub).